Here is a 210-residue protein sequence, read N- to C-terminus: Glutathione S-transferase 2 (210 aa).

Positions 1–80 constitute a GST N-terminal domain; sequence MDFYYLPLSA…YLVEKYGKQN (80 aa). Glutathione is bound by residues S9, 50–52, and 64–66; these read HTI and ESR. In terms of domain architecture, GST C-terminal spans 87-208; sequence CPKKRALINQ…AGCLEMKKYF (122 aa).

Belongs to the GST superfamily. Theta family. In terms of assembly, homodimer.

It catalyses the reaction RX + glutathione = an S-substituted glutathione + a halide anion + H(+). Functionally, conjugation of reduced glutathione to a wide number of exogenous and endogenous hydrophobic electrophiles. The chain is Glutathione S-transferase 2 (Gst2) from Musca domestica (House fly).